Here is a 142-residue protein sequence, read N- to C-terminus: Large ribosomal subunit protein uL13 (142 aa).

This sequence belongs to the universal ribosomal protein uL13 family. Part of the 50S ribosomal subunit.

In terms of biological role, this protein is one of the early assembly proteins of the 50S ribosomal subunit, although it is not seen to bind rRNA by itself. It is important during the early stages of 50S assembly. The sequence is that of Large ribosomal subunit protein uL13 from Acidovorax sp. (strain JS42).